Consider the following 227-residue polypeptide: Phosphoglycolate phosphatase (227 aa).

The Nucleophile role is filled by Asp8. Positions 8 and 10 each coordinate Mg(2+). Substrate is bound at residue Lys150. The Mg(2+) site is built by Asp173 and Asp177.

The protein belongs to the archaeal SPP-like hydrolase family. Requires Mg(2+) as cofactor.

The catalysed reaction is 2-phosphoglycolate + H2O = glycolate + phosphate. Functionally, catalyzes the dephosphorylation of 2-phosphoglycolate. The protein is Phosphoglycolate phosphatase of Sulfolobus acidocaldarius (strain ATCC 33909 / DSM 639 / JCM 8929 / NBRC 15157 / NCIMB 11770).